Reading from the N-terminus, the 226-residue chain is Transmembrane gamma-carboxyglutamic acid protein 4 (226 aa).

Residues 1–17 (MFPLLIVLSQLPRLTLA) form the signal peptide. Positions 18–49 (VPHCIRSLKDSEHAPEEVFASKEAANIFMHRR) are excised as a propeptide. Topologically, residues 50–113 (LLNNRFDLEL…GSDVNKEKID (64 aa)) are extracellular. Residues 52 to 98 (NNRFDLELFTPGDLERECYEEFCSYEEAREILGDDENTIKFWQTYSI) enclose the Gla domain. A disulfide bridge links C69 with C74. A 4-carboxyglutamate modification is found at E72. A helical membrane pass occupies residues 114-134 (VMSLLTGLIVAGVFLVIFGLV). Residues 135-226 (GYYVCLTKCK…FKKSMSLPSH (92 aa)) are Cytoplasmic-facing. S164 bears the Phosphoserine mark. The LPXY motif; mediates binding to WW domain-containing proteins signature appears at 186–189 (LPSY). Residues 204–207 (PPPY) carry the PPXY motif; mediates binding to WW domain-containing proteins motif.

This sequence belongs to the commissureless family. Interacts (via cytoplasmic domain) with WW domain-containing proteins MAGI1, MAGI3, NEDD4, NEDD4L, WWTR1/TAZ and YAP1. In terms of processing, gamma-carboxyglutamate residues are formed by vitamin K dependent carboxylation. These residues are essential for the binding of calcium.

It is found in the endoplasmic reticulum-Golgi intermediate compartment membrane. Its subcellular location is the cell membrane. In terms of biological role, may control axon guidance across the CNS. Prevents the delivery of ROBO1 at the cell surface and down-regulates its expression. In Mus musculus (Mouse), this protein is Transmembrane gamma-carboxyglutamic acid protein 4 (Prrg4).